The following is a 94-amino-acid chain: Pyrimidine/purine nucleoside phosphorylase (94 aa).

It belongs to the nucleoside phosphorylase PpnP family.

The catalysed reaction is a purine D-ribonucleoside + phosphate = a purine nucleobase + alpha-D-ribose 1-phosphate. The enzyme catalyses adenosine + phosphate = alpha-D-ribose 1-phosphate + adenine. It carries out the reaction cytidine + phosphate = cytosine + alpha-D-ribose 1-phosphate. It catalyses the reaction guanosine + phosphate = alpha-D-ribose 1-phosphate + guanine. The catalysed reaction is inosine + phosphate = alpha-D-ribose 1-phosphate + hypoxanthine. The enzyme catalyses thymidine + phosphate = 2-deoxy-alpha-D-ribose 1-phosphate + thymine. It carries out the reaction uridine + phosphate = alpha-D-ribose 1-phosphate + uracil. It catalyses the reaction xanthosine + phosphate = alpha-D-ribose 1-phosphate + xanthine. Functionally, catalyzes the phosphorolysis of diverse nucleosides, yielding D-ribose 1-phosphate and the respective free bases. Can use uridine, adenosine, guanosine, cytidine, thymidine, inosine and xanthosine as substrates. Also catalyzes the reverse reactions. This is Pyrimidine/purine nucleoside phosphorylase from Pseudomonas fluorescens (strain Pf0-1).